The chain runs to 379 residues: Multicilin (379 aa).

Positions 1 to 129 are necessary and sufficient for its degradation during the cell cycle; sequence MQACEGSAAG…AMDDLIADSS (129 aa). Disordered stretches follow at residues 26 to 71 and 88 to 107; these read SRRT…APLP and LGTEASPSGDSSASQNPSLQ. Positions 92-107 are enriched in polar residues; that stretch reads ASPSGDSSASQNPSLQ. The segment at 130–379 is necessary and sufficient for proper nuclear localization; that stretch reads SLMSPPLTNS…GGYKFRWVPS (250 aa). The interval 171–241 is necessary and sufficient for interaction with GMNN and sufficient for homodimerization; the sequence is PPPTEQYWKE…SVLDKLMITQ (71 aa). Residues 175–223 adopt a coiled-coil conformation; sequence EQYWKEVADQNQRALGTALIENNQLHVTLTQKQEEIASLRERNVQLKEL. Over residues 291-309 the composition is skewed to basic and acidic residues; that stretch reads NRDPKRPRLQPEPDSKDCS. Residues 291-312 form a disordered region; sequence NRDPKRPRLQPEPDSKDCSSRN.

It belongs to the geminin family. In terms of assembly, heterodimer (via coiled-coil domain) with GMNN (via coiled-coil domain); targets GMNN to the nucleus. Can form homodimers (in vitro, via coiled-coil domain), but these are much less stable than the heterodimer formed with GMNN.

It localises to the nucleus. In terms of biological role, transcription regulator specifically required for multiciliate cell differentiation. Acts in a multiprotein complex containing E2F4 and E2F5 that binds and activates genes required for centriole biogenesis. Required for the deuterosome-mediated acentriolar pathway. Plays a role in mitotic cell cycle progression by promoting cell cycle exit. Modulates GMNN activity by reducing its affinity for CDT1. This chain is Multicilin (Mcidas), found in Mus musculus (Mouse).